Reading from the N-terminus, the 752-residue chain is Zinc finger protein 425 (752 aa).

The region spanning 9-80 is the KRAB domain; it reads VTFDDVALYF…EQGCLDKTRR (72 aa). 19 C2H2-type zinc fingers span residues 190-212, 246-268, 274-296, 302-324, 330-352, 358-380, 386-408, 414-436, 442-464, 470-492, 498-520, 526-548, 554-576, 582-604, 610-632, 638-660, 666-688, 694-716, and 722-744; these read YSCYVCRKVFQVRRDLLKHKRSH, FQCSECEKSYFLKGSLVTHQVVH, YPCPECDKTFRYRANLKKHLCLH, FCCGECGRAFVQQCELTEHLRLH, FQCPQCDRCFRLKRGMKVHLTQH, FHCPECGRSFSRKAALKTHQRTH, FSCGECGRKFIYKIKLDEHIRVH, FSCPECNKSFRLKRSLKAHGLQH, FQCPECSRGFFWRNAMRAHQRLH, FPCAECGKRFTRPSKLACHTRVH, FPCGECKKTFSQQSRLTQHLKVH, FSCAECGRSFRRRAHLTEHTRLH, FQCPECDKSFSWKASMKFHQRMH, FACGECDKTYTHQSQLTEHLRLH, YQCPECEKTFRLKGNLKSHLLQH, FSCVMCGKSFTQQYRLTEHIRVH, FQCPECDKSYCIRGSLKVHLYKH, FQCPECGKGFLQKRSLKAHLCLH, and FSCDECGRSFTYVGALKTHIAVH.

The protein belongs to the krueppel C2H2-type zinc-finger protein family.

The protein localises to the nucleus. Its subcellular location is the cytoplasm. Its function is as follows. Acts as a transcriptional repressor. The sequence is that of Zinc finger protein 425 (ZNF425) from Homo sapiens (Human).